Here is a 499-residue protein sequence, read N- to C-terminus: uncharacterized protein (499 aa).

The next 12 membrane-spanning stretches (helical) occupy residues 51–71, 98–118, 127–147, 155–175, 187–207, 220–240, 301–321, 325–345, 352–372, 378–398, 412–432, and 444–464; these read LLFR…LVAF, IIAS…TLLM, LAFI…CHNF, LVLG…LTMI, YLFA…YAVL, WLFI…YFII, CLYG…YTSL, YMTI…SFLS, GIIL…LLAC, VLYF…GLNV, ATAI…AGQI, and LTSL…IFFL.

It belongs to the major facilitator superfamily. Allantoate permease family.

Its subcellular location is the golgi apparatus. The protein localises to the membrane. This is an uncharacterized protein from Schizosaccharomyces pombe (strain 972 / ATCC 24843) (Fission yeast).